A 139-amino-acid polypeptide reads, in one-letter code: Diacylglycerol acyltransferase/mycolyltransferase Ag85A (139 aa).

Ser-10 functions as the Nucleophile in the catalytic mechanism. Ser-10 and Asp-38 together coordinate substrate. Residue Glu-114 is part of the active site. Residues 116–119 (FVRT) and Lys-123 contribute to the substrate site.

Belongs to the mycobacterial A85 antigen family. Homodimer.

The protein resides in the secreted. It localises to the cell wall. Its subcellular location is the cytoplasm. The enzyme catalyses an acyl-CoA + a 1,2-diacyl-sn-glycerol = a triacyl-sn-glycerol + CoA. The catalysed reaction is 2 alpha,alpha'-trehalose 6-mycolate = alpha,alpha'-trehalose 6,6'-bismycolate + alpha,alpha-trehalose. The antigen 85 proteins (FbpA, FbpB, FbpC) are responsible for the high affinity of mycobacteria for fibronectin, a large adhesive glycoprotein, which facilitates the attachment of M.tuberculosis to murine alveolar macrophages (AMs). They also help to maintain the integrity of the cell wall by catalyzing the transfer of mycolic acids to cell wall arabinogalactan, and through the synthesis of alpha,alpha-trehalose dimycolate (TDM, cord factor). They catalyze the transfer of a mycoloyl residue from one molecule of alpha,alpha-trehalose monomycolate (TMM) to another TMM, leading to the formation of TDM. FbpA mediates triacylglycerol (TAG) formation with long-chain acyl-CoA as the acyl donor and 1,2-dipalmitoyl-sn-glycerol (1,2-dipalmitin) as the acyl acceptor. It has a preference for C26:0-CoA over C18:1-CoA. In Mycobacterium marinum, this protein is Diacylglycerol acyltransferase/mycolyltransferase Ag85A (fbpA).